A 220-amino-acid polypeptide reads, in one-letter code: Protein-L-isoaspartate O-methyltransferase (220 aa).

S67 is an active-site residue.

Belongs to the methyltransferase superfamily. L-isoaspartyl/D-aspartyl protein methyltransferase family.

It is found in the cytoplasm. The enzyme catalyses [protein]-L-isoaspartate + S-adenosyl-L-methionine = [protein]-L-isoaspartate alpha-methyl ester + S-adenosyl-L-homocysteine. Functionally, catalyzes the methyl esterification of L-isoaspartyl residues in peptides and proteins that result from spontaneous decomposition of normal L-aspartyl and L-asparaginyl residues. It plays a role in the repair and/or degradation of damaged proteins. In Chlorobium phaeobacteroides (strain BS1), this protein is Protein-L-isoaspartate O-methyltransferase.